Consider the following 81-residue polypeptide: Insulin (81 aa).

3 cysteine pairs are disulfide-bonded: cysteine 7–cysteine 67, cysteine 19–cysteine 80, and cysteine 66–cysteine 71. Residues 33 to 58 constitute a propeptide, c peptide; sequence DVEQPLVNGPLHGEVGELPFQHEEYQ.

The protein belongs to the insulin family. Heterodimer of a B chain and an A chain linked by two disulfide bonds.

Its subcellular location is the secreted. Functionally, insulin decreases blood glucose concentration. It increases cell permeability to monosaccharides, amino acids and fatty acids. It accelerates glycolysis, the pentose phosphate cycle, and glycogen synthesis in liver. This Anas platyrhynchos (Mallard) protein is Insulin (INS).